Reading from the N-terminus, the 297-residue chain is tRNA pseudouridine synthase B (297 aa).

The active-site Nucleophile is the Asp-39.

The protein belongs to the pseudouridine synthase TruB family. Type 1 subfamily.

It catalyses the reaction uridine(55) in tRNA = pseudouridine(55) in tRNA. In terms of biological role, responsible for synthesis of pseudouridine from uracil-55 in the psi GC loop of transfer RNAs. In Lactobacillus acidophilus (strain ATCC 700396 / NCK56 / N2 / NCFM), this protein is tRNA pseudouridine synthase B.